Here is a 475-residue protein sequence, read N- to C-terminus: Tetratricopeptide repeat protein 29 (475 aa).

TPR repeat units follow at residues 92 to 131 (DALR…EDAE), 136 to 173 (FEDV…AQLI), 182 to 215 (AEAH…TQGR), 234 to 267 (LRTY…AKEG), 274 to 307 (AEAS…STDL), 314 to 347 (GRGY…ARNN), and 354 to 387 (VRAS…TVEL). The interval 437–475 (IEPDPVTEEFRGSTVEAVSQNSERLEELSRFPGDQKNET) is disordered. The segment covering 459–475 (ERLEELSRFPGDQKNET) has biased composition (basic and acidic residues).

Expressed in spermatozoa (at protein level).

It localises to the cytoplasm. Its subcellular location is the cytoskeleton. The protein resides in the flagellum axoneme. Axonemal protein which is implicated in axonemal and/or peri-axonemal structure assembly and regulates flagellum assembly and beating and therefore sperm motility. The polypeptide is Tetratricopeptide repeat protein 29 (TTC29) (Homo sapiens (Human)).